A 244-amino-acid chain; its full sequence is 5'-deoxynucleotidase (244 aa).

It carries out the reaction a 2'-deoxyribonucleoside 5'-phosphate + H2O = a 2'-deoxyribonucleoside + phosphate. Following host DNA degradation, is responsible for the degradation of 5'-dNMP's to deoxynucleosides that can be further excreted. Active on deoxynucleoside 5'-monophosphates but not active as a phosphatase on ribonucleotides, deoxynucleoside 5'-triphosphates, deoxynucleoside 3'-monophosphates, or deoxyoligonucleotides. In Escherichia coli (Enterobacteria phage T5), this protein is 5'-deoxynucleotidase (dmp).